The sequence spans 339 residues: UDP-N-acetylglucosamine--N-acetylmuramyl-(pentapeptide) pyrophosphoryl-undecaprenol N-acetylglucosamine transferase (339 aa).

Residues 11–13, N127, R170, S188, I235, and Q280 each bind UDP-N-acetyl-alpha-D-glucosamine; that span reads TGG.

This sequence belongs to the glycosyltransferase 28 family. MurG subfamily.

The protein resides in the cell inner membrane. The catalysed reaction is di-trans,octa-cis-undecaprenyl diphospho-N-acetyl-alpha-D-muramoyl-L-alanyl-D-glutamyl-meso-2,6-diaminopimeloyl-D-alanyl-D-alanine + UDP-N-acetyl-alpha-D-glucosamine = di-trans,octa-cis-undecaprenyl diphospho-[N-acetyl-alpha-D-glucosaminyl-(1-&gt;4)]-N-acetyl-alpha-D-muramoyl-L-alanyl-D-glutamyl-meso-2,6-diaminopimeloyl-D-alanyl-D-alanine + UDP + H(+). It functions in the pathway cell wall biogenesis; peptidoglycan biosynthesis. Cell wall formation. Catalyzes the transfer of a GlcNAc subunit on undecaprenyl-pyrophosphoryl-MurNAc-pentapeptide (lipid intermediate I) to form undecaprenyl-pyrophosphoryl-MurNAc-(pentapeptide)GlcNAc (lipid intermediate II). The polypeptide is UDP-N-acetylglucosamine--N-acetylmuramyl-(pentapeptide) pyrophosphoryl-undecaprenol N-acetylglucosamine transferase (Thermotoga sp. (strain RQ2)).